Reading from the N-terminus, the 118-residue chain is Thioredoxin H5 (118 aa).

At alanine 2 the chain carries N-acetylalanine. The Thioredoxin domain occupies 2-113 (AGEGEVIACH…INEKLMKHGG (112 aa)). Active-site nucleophile residues include cysteine 39 and cysteine 42. Cysteine 39 and cysteine 42 are disulfide-bonded.

It belongs to the thioredoxin family. Plant H-type subfamily. In terms of assembly, interacts with MDH1.

It is found in the cytoplasm. Thiol-disulfide oxidoreductase involved in response to pathogens and oxidative stresses. Required for the response to victorin, a phytotoxin which induces programmed cell death in sensitive plants. Possesses insulin disulfide bonds reducing activity. The chain is Thioredoxin H5 (TRX5) from Arabidopsis thaliana (Mouse-ear cress).